Reading from the N-terminus, the 124-residue chain is MLPAQYRMTRSTEFGATVSRGTRAAQPDLVLYTLRSDETGEPGPRVGLIVSKAVGNAVVRHRVSRRLRHAARGILERLDSRDRVVIRALPRSRDAGTQRFEQELHTALDRIHARTITARNGAPS.

It belongs to the RnpA family. Consists of a catalytic RNA component (M1 or rnpB) and a protein subunit.

The catalysed reaction is Endonucleolytic cleavage of RNA, removing 5'-extranucleotides from tRNA precursor.. Its function is as follows. RNaseP catalyzes the removal of the 5'-leader sequence from pre-tRNA to produce the mature 5'-terminus. It can also cleave other RNA substrates such as 4.5S RNA. The protein component plays an auxiliary but essential role in vivo by binding to the 5'-leader sequence and broadening the substrate specificity of the ribozyme. This is Ribonuclease P protein component from Mycolicibacterium gilvum (strain PYR-GCK) (Mycobacterium gilvum (strain PYR-GCK)).